A 590-amino-acid chain; its full sequence is Proline--tRNA ligase (590 aa).

It belongs to the class-II aminoacyl-tRNA synthetase family. ProS type 1 subfamily. Homodimer.

The protein localises to the cytoplasm. It catalyses the reaction tRNA(Pro) + L-proline + ATP = L-prolyl-tRNA(Pro) + AMP + diphosphate. In terms of biological role, catalyzes the attachment of proline to tRNA(Pro) in a two-step reaction: proline is first activated by ATP to form Pro-AMP and then transferred to the acceptor end of tRNA(Pro). As ProRS can inadvertently accommodate and process non-cognate amino acids such as alanine and cysteine, to avoid such errors it has two additional distinct editing activities against alanine. One activity is designated as 'pretransfer' editing and involves the tRNA(Pro)-independent hydrolysis of activated Ala-AMP. The other activity is designated 'posttransfer' editing and involves deacylation of mischarged Ala-tRNA(Pro). The misacylated Cys-tRNA(Pro) is not edited by ProRS. The chain is Proline--tRNA ligase from Leifsonia xyli subsp. xyli (strain CTCB07).